The chain runs to 478 residues: tRNA(Ile)-lysidine synthase (478 aa).

An ATP-binding site is contributed by 27-32 (SGGSDS).

This sequence belongs to the tRNA(Ile)-lysidine synthase family.

The protein resides in the cytoplasm. The catalysed reaction is cytidine(34) in tRNA(Ile2) + L-lysine + ATP = lysidine(34) in tRNA(Ile2) + AMP + diphosphate + H(+). Ligates lysine onto the cytidine present at position 34 of the AUA codon-specific tRNA(Ile) that contains the anticodon CAU, in an ATP-dependent manner. Cytidine is converted to lysidine, thus changing the amino acid specificity of the tRNA from methionine to isoleucine. The sequence is that of tRNA(Ile)-lysidine synthase from Rickettsia conorii (strain ATCC VR-613 / Malish 7).